We begin with the raw amino-acid sequence, 375 residues long: GDP-mannose transporter GONST2 (375 aa).

A run of 9 helical transmembrane segments spans residues 79–99 (LVSGAAYCISSCSMIILNKIV), 112–132 (MLYQNLISCLVVAVLDISGVV), 141–161 (LIRVWMPVNVIFVGMLVSGMY), 165–185 (YINVAMVTILKNATNILTGIG), 199–219 (WAAMFMMIISAISGGITDLTF), 262–282 (MVLLNNLLSIPFGIILIILLG), 300–320 (VVATASGFLGLAISFTSMWFL), 327–347 (TYSLVGSLNKVPISLAGLVLF), and 349–369 (VPLSLPNLFSILFGLFAGVVF).

It belongs to the nucleotide-sugar transporter family. GDP-Mannose:GMP antiporter (GMA) (TC 2.A.7.13) subfamily. In terms of tissue distribution, expressed in rosette leaves, stems, flowers and siliques.

Its subcellular location is the golgi apparatus membrane. Functionally, GDP-mannose transporter that may be involved in the import of GDP-mannose from the cytoplasm into the Golgi lumen. The protein is GDP-mannose transporter GONST2 of Arabidopsis thaliana (Mouse-ear cress).